Reading from the N-terminus, the 85-residue chain is Cell division topological specificity factor (85 aa).

Belongs to the MinE family.

In terms of biological role, prevents the cell division inhibition by proteins MinC and MinD at internal division sites while permitting inhibition at polar sites. This ensures cell division at the proper site by restricting the formation of a division septum at the midpoint of the long axis of the cell. The polypeptide is Cell division topological specificity factor (Stutzerimonas stutzeri (strain A1501) (Pseudomonas stutzeri)).